The chain runs to 192 residues: Pyridoxal 5'-phosphate synthase subunit PdxT (192 aa).

Residue 46–48 (GES) participates in L-glutamine binding. The active-site Nucleophile is the C76. L-glutamine-binding positions include R103 and 131–132 (IR). Active-site charge relay system residues include H167 and E169.

Belongs to the glutaminase PdxT/SNO family. In the presence of PdxS, forms a dodecamer of heterodimers. Only shows activity in the heterodimer.

It carries out the reaction aldehydo-D-ribose 5-phosphate + D-glyceraldehyde 3-phosphate + L-glutamine = pyridoxal 5'-phosphate + L-glutamate + phosphate + 3 H2O + H(+). The enzyme catalyses L-glutamine + H2O = L-glutamate + NH4(+). Its pathway is cofactor biosynthesis; pyridoxal 5'-phosphate biosynthesis. In terms of biological role, catalyzes the hydrolysis of glutamine to glutamate and ammonia as part of the biosynthesis of pyridoxal 5'-phosphate. The resulting ammonia molecule is channeled to the active site of PdxS. The chain is Pyridoxal 5'-phosphate synthase subunit PdxT from Koribacter versatilis (strain Ellin345).